The sequence spans 258 residues: Probable dihydroorotate dehydrogenase B (NAD(+)), electron transfer subunit (258 aa).

Residues 1–90 (MRPISATIKE…RGPYGNGWEI (90 aa)) enclose the FAD-binding FR-type domain. [2Fe-2S] cluster is bound by residues Cys-210, Cys-215, Cys-218, and Cys-228.

The protein belongs to the PyrK family. In terms of assembly, heterotetramer of 2 PyrK and 2 PyrD type B subunits. [2Fe-2S] cluster is required as a cofactor. FAD serves as cofactor.

It participates in pyrimidine metabolism; UMP biosynthesis via de novo pathway; orotate from (S)-dihydroorotate (NAD(+) route): step 1/1. Functionally, responsible for channeling the electrons from the oxidation of dihydroorotate from the FMN redox center in the PyrD type B subunit to the ultimate electron acceptor NAD(+). The protein is Probable dihydroorotate dehydrogenase B (NAD(+)), electron transfer subunit of Methanocella arvoryzae (strain DSM 22066 / NBRC 105507 / MRE50).